A 308-amino-acid polypeptide reads, in one-letter code: tRNA dimethylallyltransferase (308 aa).

14–21 (GPTASGKT) is a binding site for ATP. Substrate is bound at residue 16 to 21 (TASGKT). Interaction with substrate tRNA regions lie at residues 39 to 42 (DSAL), 163 to 167 (QRLSR), and 244 to 249 (RCVGYR).

It belongs to the IPP transferase family. As to quaternary structure, monomer. Mg(2+) is required as a cofactor.

It carries out the reaction adenosine(37) in tRNA + dimethylallyl diphosphate = N(6)-dimethylallyladenosine(37) in tRNA + diphosphate. Functionally, catalyzes the transfer of a dimethylallyl group onto the adenine at position 37 in tRNAs that read codons beginning with uridine, leading to the formation of N6-(dimethylallyl)adenosine (i(6)A). The polypeptide is tRNA dimethylallyltransferase (Shewanella baltica (strain OS223)).